Here is a 499-residue protein sequence, read N- to C-terminus: Glucose-6-phosphate exchanger SLC37A2 (499 aa).

A helical membrane pass occupies residues 21-40 (YRGFIIVMTFLFYTCYHMSR). 3 N-linked (GlcNAc...) asparagine glycosylation sites follow: N53, N62, and N66. The next 11 helical transmembrane spans lie at 86–106 (GSLD…SGIF), 116–136 (LSGG…GYYW), 138–158 (IHAL…QTTG), 187–207 (AVGN…AWGL), 208–228 (SFIV…FFLV), 302–322 (LCLL…PLYI), 334–354 (GDLS…AGGI), 362–382 (AITC…YNYL), 391–411 (VAML…ITTA), 434–454 (AIID…AGVL), and 458–478 (GWNY…LLLV).

This sequence belongs to the major facilitator superfamily. Organophosphate:Pi antiporter (OPA) (TC 2.A.1.4) family.

The protein localises to the endoplasmic reticulum membrane. The catalysed reaction is D-glucose 6-phosphate(in) + phosphate(out) = D-glucose 6-phosphate(out) + phosphate(in). In terms of biological role, inorganic phosphate and glucose-6-phosphate antiporter. May transport cytoplasmic glucose-6-phosphate into the lumen of the endoplasmic reticulum and translocate inorganic phosphate into the opposite direction. This Xenopus tropicalis (Western clawed frog) protein is Glucose-6-phosphate exchanger SLC37A2.